The following is a 310-amino-acid chain: GPN-loop GTPase 2 (310 aa).

Alanine 2 is modified (N-acetylalanine). 19-24 (GSGKTT) lines the GTP pocket. Residues 76–78 (GPN) carry the Gly-Pro-Asn (GPN)-loop; involved in dimer interface motif. 178 to 181 (SKMD) contacts GTP.

It belongs to the GPN-loop GTPase family. As to quaternary structure, heterodimers with GPN1 or GPN3. Binds to RNA polymerase II (RNAPII).

Its function is as follows. Small GTPase required for proper localization of RNA polymerase II and III (RNAPII and RNAPIII). May act at an RNAP assembly step prior to nuclear import. The sequence is that of GPN-loop GTPase 2 from Mus musculus (Mouse).